Consider the following 209-residue polypeptide: Autophagy-related protein 29 (209 aa).

Serine 104 carries the phosphoserine modification. A disordered region spans residues 156-198 (NIHKKTSDSENKPNDKLDKDGINKEMECGSSDDDLSSSLSVSK). Positions 160–182 (KTSDSENKPNDKLDKDGINKEME) are enriched in basic and acidic residues. Serine 185 and serine 186 each carry phosphoserine.

Belongs to the ATG29 family. In terms of assembly, forms a stable complex with ATG17 and ATG31. Interacts directly with ATG31. The ATG17-ATG29-ATG31 complex interacts with the ATG1-ATG13 complex. Note=The interaction with the ATG1-ATG13 complex is induced by starvation.

The protein localises to the preautophagosomal structure. Functionally, plays a role in autophagy. Functions at the preautophagosomal structure (PAS) in order to form normal autophagosomes under starvation conditions. Also plays a role in mitophagy and regulation of filamentous growth. The chain is Autophagy-related protein 29 (ATG29) from Saccharomyces cerevisiae (strain YJM789) (Baker's yeast).